The following is a 394-amino-acid chain: Thioredoxin-interacting protein (394 aa).

A Glycyl lysine isopeptide (Lys-Gly) (interchain with G-Cter in ubiquitin) cross-link involves residue lysine 212. Position 361 is a phosphoserine (serine 361).

It belongs to the arrestin family. In terms of assembly, homodimer; disulfide-linked. Interacts with TXN/thioredoxin through its redox-active site. Interacts with transcriptional repressors ZBTB16, ZBTB32 and HDAC1. Interacts with DDIT4. Ubiquitinated; undergoes heterotypic 'Lys-48'-/'Lys-63'-branched polyubiquitination catalyzed by ITCH and UBR5 resulting in proteasomal degradation. Deubiquitinated by USP5, leading to TXNIP stabilization.

The protein localises to the cytoplasm. May act as an oxidative stress mediator by inhibiting thioredoxin activity or by limiting its bioavailability. Interacts with COPS5 and restores COPS5-induced suppression of CDKN1B stability, blocking the COPS5-mediated translocation of CDKN1B from the nucleus to the cytoplasm. Functions as a transcriptional repressor, possibly by acting as a bridge molecule between transcription factors and corepressor complexes, and over-expression will induce G0/G1 cell cycle arrest. Required for the maturation of natural killer cells. Acts as a suppressor of tumor cell growth. Inhibits the proteasomal degradation of DDIT4, and thereby contributes to the inhibition of the mammalian target of rapamycin complex 1 (mTORC1). In Rattus norvegicus (Rat), this protein is Thioredoxin-interacting protein (Txnip).